The sequence spans 130 residues: Flagellar assembly factor FliW (130 aa).

This sequence belongs to the FliW family. In terms of assembly, interacts with translational regulator CsrA and flagellin(s).

It is found in the cytoplasm. In terms of biological role, acts as an anti-CsrA protein, binds CsrA and prevents it from repressing translation of its target genes, one of which is flagellin. Binds to flagellin and participates in the assembly of the flagellum. This Borrelia hermsii (strain HS1 / DAH) protein is Flagellar assembly factor FliW.